The following is a 220-amino-acid chain: Zinc finger protein 36 (220 aa).

The C2H2-type 1 zinc-finger motif lies at 73-95 (FRCTVCGKAFASYQALGGHKSSH). Positions 90 to 134 (GHKSSHRKPPSPGDHYGAAAAAQQLASAGDSKEDSASSAAGSTGP) are disordered. Low complexity predominate over residues 107–117 (AAAAAQQLASA). The C2H2-type 2 zinc finger occupies 135-157 (HRCTICRRSFATGQALGGHKRCH).

Its function is as follows. Probable transcription factor involved in abscisic acid (ABA) signaling. Required for the regulation of the cross-talk between NADPH oxidase, hydrogen peroxide and MAP kinase in ABA signaling. Regulates the expression of the NADPH oxidase genes RBOHB and RBOHE, and the MAPK genes MPK1, MPK4, MPK5, MPK7 and MPK14. Regulates ABA-induced hydrogen peroxide production and antioxidant defense. Required for tolerance to water stress and oxidative stress. This chain is Zinc finger protein 36, found in Oryza sativa subsp. japonica (Rice).